Reading from the N-terminus, the 252-residue chain is Trans-aconitate 2-methyltransferase (252 aa).

Belongs to the methyltransferase superfamily. Tam family.

The protein localises to the cytoplasm. It carries out the reaction trans-aconitate + S-adenosyl-L-methionine = (E)-3-(methoxycarbonyl)pent-2-enedioate + S-adenosyl-L-homocysteine. Functionally, catalyzes the S-adenosylmethionine monomethyl esterification of trans-aconitate. The sequence is that of Trans-aconitate 2-methyltransferase from Escherichia coli O17:K52:H18 (strain UMN026 / ExPEC).